A 146-amino-acid polypeptide reads, in one-letter code: UPF0178 protein BcerKBAB4_2842 (146 aa).

It belongs to the UPF0178 family.

This is UPF0178 protein BcerKBAB4_2842 from Bacillus mycoides (strain KBAB4) (Bacillus weihenstephanensis).